Consider the following 106-residue polypeptide: PAT complex subunit Asterix (106 aa).

The interval 1 to 29 is disordered; sequence MSTNNMSDPRRPNKVLRYKPPPSECNPAL. N-acetylserine is present on S2. Topologically, residues 2–32 are cytoplasmic; sequence STNNMSDPRRPNKVLRYKPPPSECNPALDDP. The helical transmembrane segment at 33–51 threads the bilayer; it reads TPDYMNLLGMIFSMCGLML. Position 52 (K52) is a topological domain, lumenal. A helical membrane pass occupies residues 53 to 70; that stretch reads LKWCAWVAVYCSFISFAN. Over 71-74 the chain is Cytoplasmic; that stretch reads SRSS. The chain crosses the membrane as a helical span at residues 75 to 95; that stretch reads EDTKQMMSSFMLSISAVVMSY. The Lumenal segment spans residues 96–106; that stretch reads LQNPQPMTPPW.

The protein belongs to the Asterix family. Component of the PAT complex, composed of WDR83OS/Asterix and CCDC47. The PAT complex is part of the multi-pass translocon (MPT) complex, composed of three subcomplexes, the GEL complex (composed of RAB5IF/OPTI and TMCO1), the BOS complex (composed of NCLN/Nicalin, NOMO1 and TMEM147) and the PAT complex (composed of WDR83OS/Asterix and CCDC47). The MPT complex associates with the SEC61 complex.

It localises to the endoplasmic reticulum membrane. Its function is as follows. Component of the multi-pass translocon (MPT) complex that mediates insertion of multi-pass membrane proteins into the lipid bilayer of membranes. The MPT complex takes over after the SEC61 complex: following membrane insertion of the first few transmembrane segments of proteins by the SEC61 complex, the MPT complex occludes the lateral gate of the SEC61 complex to promote insertion of subsequent transmembrane regions. Within the MPT complex, the PAT subcomplex sequesters any highly polar regions in the transmembrane domains away from the non-polar membrane environment until they can be buried in the interior of the fully assembled protein. Within the PAT subcomplex, WDR83OS/Asterix binds to and redirects the substrate to a location behind the SEC61 complex. This Canis lupus familiaris (Dog) protein is PAT complex subunit Asterix (WDR83OS).